We begin with the raw amino-acid sequence, 990 residues long: MEEKTHHHHHSTNKHIPSSKSRTPLLHKPYHHHVQTNPPPFLLHPSSHQNLNLVASNLPSSYYYYYYCYFYSQFHNSLPPPPPPHLLPLSPPLPPLLPLPPPHSMTRFHKSLPVSQVVERKQQHQQKKKIQVSNNKVSGSIAIEEAALVVAKRPDFGGQDGSVIYLLANHFLVKFDSSQRIYHYNVEISPQPSKEIARMIKQKLVETDRNSFSGVVPAFDGRQNIYSPVEFQGDRLEFFVNLPIPSCKAVMNYGDLREKQPQKKIEKLFRVNMKLVSKFDGKEQRKEGEDWAPLPPEYIHALDVILRENPMEKCTSIGRSFYSSSMGGSKEIGGGAVGLRGFFQSLRHTQQGLALNMDLSITAFHESIGVIAYLQKRLEFLTDLPRNKGRELSLEEKREVEKALKNIRVFVCHRETVQRYRVYGLTEEITENIWFPDREGKYLRLMSYFKDHYGYEIQFKNLPCLQISRARPCYLPMELCMICEGQKFLGKLSDDQAAKIMKMGCQKPNERKAIIDKVMTGSVGPSSGNQTREFNLEVSREMTLLKGRILQPPKLKLDRPRNLKESKVFKGTRIERWALMSIGGSSDQKSTIPKFINELTQKCEHLGVFLSKNTLSSTFFEPSHILNNISLLESKLKEIQRAASNNLQLIICVMEKKHKGYGDLKRISETRIGVVTQCCLYPNITKLSSQFVSNLALKINAKIGGSMTELYNSIPSHIPRLLRPDEPVIFMGADVTHPHPFDDCSPSVAAVVGSINWPEANRYVSRMRSQTHRQEIIQDLDLMVKELLDDFYKAVKKLPNRIIFFRDGVSETQFKKVLQEELQSIKTACSKFQDYNPSITFAVVQKRHHTRLFRCDPDHENIPPGTVVDTVITHPKEFDFYLCSHLGVKGTSRPTHYHILWDENEFTSDELQRLVYNLCYTFVRCTKPISIVPPAYYAHLAAYRGRLYIERSSESNGGSMNPSSVSRVGPPKTIPLPKLSDNVKNLMFYC.

Positions 1–13 (MEEKTHHHHHSTN) are enriched in basic residues. The interval 1 to 25 (MEEKTHHHHHSTNKHIPSSKSRTPL) is disordered. The region spanning 379–484 (EFLTDLPRNK…LPMELCMICE (106 aa)) is the PAZ domain. One can recognise a Piwi domain in the interval 649 to 950 (LIICVMEKKH…AAYRGRLYIE (302 aa)). The disordered stretch occupies residues 953 to 973 (SESNGGSMNPSSVSRVGPPKT). A compositionally biased stretch (polar residues) spans 954–966 (ESNGGSMNPSSVS).

The protein belongs to the argonaute family. Ago subfamily. In terms of tissue distribution, expressed in leaves and floral buds, and at low levels in roots.

Involved in RNA-mediated post-transcriptional gene silencing (PTGS). Main component of the RNA-induced silencing complex (RISC) that binds to a short guide RNA such as a microRNA (miRNA) or small interfering RNA (siRNA). RISC uses the mature miRNA or siRNA as a guide for slicer-directed cleavage of homologous mRNAs to repress gene expression. Required for the processing of 21 nucleotide trans-acting siRNAs (ta-siRNAs) derived from TAS3a transcripts. Associates preferentially with the microRNA (miRNA) miR390 which guides the cleavage of TAS3 precursor RNA. Seems to act as miR390 specific slicer. Associates mainly with small RNAs of 21 nucleotide in length and with a 5' terminal adenosine. Acts in the RDR6/SGS3/DCL4/AGO7 trans-acting siRNA pathway involved in leaf developmental timing. Does not seem to act on leaf polarity. Required for the production of the 30-40nt bacterial-induced long siRNAs (lsiRNA). Involved in antiviral RNA silencing by contributing to efficient viral RNAs clearance. Targets less structured viral RNAs than AGO1 which is capable of targeting RNAs with more compact structures. The polypeptide is Protein argonaute 7 (AGO7) (Arabidopsis thaliana (Mouse-ear cress)).